The primary structure comprises 549 residues: Putative acyl-CoA synthetase YngI (549 aa).

ATP is bound by residues 198 to 206 (TSGTTGFPK), Asp-423, Arg-438, and Lys-529.

The protein belongs to the ATP-dependent AMP-binding enzyme family.

The sequence is that of Putative acyl-CoA synthetase YngI (yngI) from Bacillus subtilis (strain 168).